The sequence spans 397 residues: Class V chitinase CHIT5 (397 aa).

The signal sequence occupies residues 1–18 (MIIKLLVALIHYLHETMA). The 344-residue stretch at 54-397 (GVRAAYWPAW…SKQASNAWGY (344 aa)) folds into the GH18 domain. 2 N-linked (GlcNAc...) asparagine glycosylation sites follow: Asn128 and Asn147. Glu166 functions as the Proton donor in the catalytic mechanism. Residues Asn193, Asn209, Asn247, and Asn261 are each glycosylated (N-linked (GlcNAc...) asparagine).

The protein belongs to the glycosyl hydrolase 18 family. Chitinase class V subfamily.

The catalysed reaction is Random endo-hydrolysis of N-acetyl-beta-D-glucosaminide (1-&gt;4)-beta-linkages in chitin and chitodextrins.. It functions in the pathway glycan degradation; chitin degradation. Functionally, possesses chitinase activity in vitro toward glycol chitin, carboxymethyl-chitin, colloidal chitin, and the chitin oligosaccharides (N-acetylglucosamine) (GlcNAc)6 and (GlcNAc)5. Hydrolyzes (GlcNAc)6 into (GlcNAc)4 and (GlcNAc)2, or two (GlcNAc)3 molecules. Has the capacity to inhibit hyphal growth of the fungus Trichoderma viride in an agar-plate bioassay. Involved in symbiotic signaling. Required for root hair infection threads (ITs) elongation and nodule development. Possesses Nod factor (NF) hydrolase activity. NFs are lipo-chitooligosaccharide signaling molecules produced by nitrogen-fixing rhizobia to initiate nodulation (symbiosis) on the roots of legumes. Modulates NF levels and signaling to complete transition of infected nodules to functional nitrogen-fixing organs. The protein is Class V chitinase CHIT5 of Lotus japonicus (Lotus corniculatus var. japonicus).